A 70-amino-acid polypeptide reads, in one-letter code: Frenatin 4.1 (70 aa).

Residues Met-1–Cys-22 form the signal peptide. A propeptide spanning residues Glu-23–Arg-46 is cleaved from the precursor. A Lysine amide modification is found at Lys-68.

Belongs to the frog skin active peptide (FSAP) family. Frenatin subfamily. As to expression, expressed by the skin glands.

The protein resides in the secreted. It is found in the target cell membrane. In terms of biological role, peptide with unknown function. Does not show antimicrobial activity against S.aureus (MIC&gt;512 ug/mL), E.coli (MIC&gt;512 ug/mL) and C.albicans (MIC&gt;512 ug/mL). Does not show hemolytic activity. Functionally, antimicrobial peptide with activity against E.coli (MIC=128 ug/mL or 54 uM) and C.albicans (MIC=256 ug/mL or 108 uM). Does not show activity against S.aureus (MIC&gt;512 ug/mL). Does not show hemolytic activity. The protein is Frenatin 4.1 of Nyctimystes infrafrenatus (White-lipped tree frog).